Consider the following 444-residue polypeptide: D(2) dopamine receptor (444 aa).

Residues 1–37 (MDPLNLSWYDDDLERQNWSRPFNGSEGKADRPHYNYY) are Extracellular-facing. N-linked (GlcNAc...) asparagine glycans are attached at residues Asn-5, Asn-17, and Asn-23. Residues 38–60 (AMLLTLLIFIIVFGNVLVCMAVS) traverse the membrane as a helical segment. Residues 61–70 (REKALQTTTN) lie on the Cytoplasmic side of the membrane. A helical membrane pass occupies residues 71 to 93 (YLIVSLAVADLLVATLVMPWVVY). Residues 94–108 (LEVVGEWKFSRIHCD) lie on the Extracellular side of the membrane. Cysteines 107 and 182 form a disulfide. Residues 109–130 (IFVTLDVMMCTASILNLCAISI) traverse the membrane as a helical segment. Topologically, residues 131-151 (DRYTAVAMPMLYNTRYSSKRR) are cytoplasmic. Residues 152-172 (VTVMIAIVWVLSFTISCPLLF) form a helical membrane-spanning segment. Residues 173–188 (GLNNTDQNECIIANPA) are Extracellular-facing. Residues 189-213 (FVVYSSIVSFYVPFIVTLLVYIKIY) form a helical membrane-spanning segment. Residues 211-374 (KIYIVLRKRR…SQQKEKKATQ (164 aa)) form an interaction with PPP1R9B region. The Cytoplasmic segment spans residues 214–374 (IVLRKRRKRV…SQQKEKKATQ (161 aa)). Positions 282-329 (EMLSSTSPPERTRYSPIPPSHHQLTLPDPSHHGLHSNPDSPAKPEKNG) are disordered. The helical transmembrane segment at 375 to 396 (MLAIVLGVFIICWLPFFITHIL) threads the bilayer. At 397 to 410 (NIHCDCNIPPVLYS) the chain is on the extracellular side. An intrachain disulfide couples Cys-400 to Cys-402. Residues 411 to 432 (AFTWLGYVNSAVNPIIYTTFNI) traverse the membrane as a helical segment. Over 433–444 (EFRKAFMKILHC) the chain is Cytoplasmic. Residue Cys-444 is the site of S-palmitoyl cysteine attachment.

Belongs to the G-protein coupled receptor 1 family. As to quaternary structure, forms homo- and heterooligomers with DRD4. The interaction with DRD4 may modulate agonist-induced downstream signaling. Interacts with CADPS and CADPS2. Interacts with GPRASP1, PPP1R9B and CLIC6. Interacts with ARRB2. Interacts with HTR2A. Interacts with DRD1. Interacts with KCNA2. In terms of processing, palmitoylated. Palmitoylation which is required for proper localization to the plasma membrane and stability of the receptor could be carried on by ZDHHC4, ZDHHC3 and ZDHHC8. In terms of tissue distribution, expressed in the anterior lobe of the pituitary gland. Expressed ventral tegmental area of the midbrain and the pars compacta of the substantia nigra. Expressed seven times more than isoform short in the caudate nucleus. Expressed in the anterior lobe of the pituitary gland. Expressed in the caudate nucleus. Not expressed in the wider brain.

Its subcellular location is the cell membrane. The protein resides in the golgi apparatus membrane. Its function is as follows. Dopamine receptor whose activity is mediated by G proteins which inhibit adenylyl cyclase. Positively regulates postnatal regression of retinal hyaloid vessels via suppression of VEGFR2/KDR activity, downstream of OPN5. This Rattus norvegicus (Rat) protein is D(2) dopamine receptor (Drd2).